Here is a 121-residue protein sequence, read N- to C-terminus: Tachykinin-3 (121 aa).

The N-terminal stretch at Met1–Ala16 is a signal peptide. The propeptide occupies Gln17–Glu78. Met90 bears the Methionine amide mark. Residues Arg93–Glu121 form a disordered region. The propeptide occupies Ser94–Glu121. Residues Gln96–Val108 show a composition bias toward polar residues.

The protein belongs to the tachykinin family.

The protein localises to the secreted. Tachykinins are active peptides which excite neurons, evoke behavioral responses, are potent vasodilators and secretagogues, and contract (directly or indirectly) many smooth muscles. Is a critical central regulator of gonadal function. This Homo sapiens (Human) protein is Tachykinin-3 (TAC3).